The primary structure comprises 1012 residues: Structural polyprotein (1012 aa).

Residue D30 coordinates a divalent metal cation. In terms of domain architecture, Peptidase S50 spans 513–755 (ADKGYEVVAN…AGRQYHLAMA (243 aa)). The Nucleophile role is filled by S652. K692 is a catalytic residue. A disordered region spans residues 969–1012 (AMELKHRNPRRAPPKPKPKPNAPTQRPPGRLGRWIRTVSDEDLE). Residues 975–986 (RNPRRAPPKPKP) show a composition bias toward basic residues. An interaction with VP1 protein region spans residues 1003–1012 (IRTVSDEDLE).

In terms of assembly, homotrimer. A central divalent metal stabilizes the VP2 trimer. Interacts with host ITGA4/ITGB1. As to quaternary structure, homodimer. Interacts (via C-terminus) with VP1 in the cytoplasm. Interacts with VP2. In terms of processing, specific enzymatic cleavages yield mature proteins. The capsid assembly seems to be regulated by polyprotein processing. The protease VP4 cleaves itself off the polyprotein, thus releasing pre-VP2 and VP3 within the infected cell. During capsid assembly, the C-terminus of pre-VP2 is further processed by VP4, giving rise to VP2, the external capsid protein and three small peptides that all stay closely associated with the capsid.

Its subcellular location is the virion. The protein localises to the host cytoplasm. In terms of biological role, capsid protein VP2 self assembles to form an icosahedral capsid with a T=13 symmetry, about 70 nm in diameter, and consisting of 260 VP2 trimers. The capsid encapsulates the genomic dsRNA. VP2 is also involved in attachment and entry into the host cell by interacting with host ITGA4/ITGB1. Its function is as follows. The precursor of VP2 plays an important role in capsid assembly. First, pre-VP2 and VP2 oligomers assemble to form a procapsid. Then, the pre-VP2 intermediates may be processed into VP2 proteins by proteolytic cleavage mediated by VP4 to obtain the mature virion. The final capsid is composed of pentamers and hexamers but VP2 has a natural tendency to assemble into all-pentameric structures. Therefore pre-VP2 may be required to allow formation of the hexameric structures. Protease VP4 is a serine protease that cleaves the polyprotein into its final products. Pre-VP2 is first partially cleaved, and may be completely processed by VP4 upon capsid maturation. Functionally, capsid protein VP3 plays a key role in virion assembly by providing a scaffold for the capsid made of VP2. May self-assemble to form a T=4-like icosahedral inner-capsid composed of at least 180 trimers. Plays a role in genomic RNA packaging by recruiting VP1 into the capsid and interacting with the dsRNA genome segments to form a ribonucleoprotein complex. Additionally, the interaction of the VP3 C-terminal tail with VP1 removes the inherent structural blockade of the polymerase active site. Thus, VP3 can also function as a transcriptional activator. In terms of biological role, structural peptide 1 is a small peptide derived from pre-VP2 C-terminus. It destabilizes and perforates cell membranes, suggesting a role during entry. Its function is as follows. Structural peptide 2 is a small peptide derived from pVP2 C-terminus. It is not essential for the virus viability, but viral growth is affected when missing. Structural peptide 3 is a small peptide derived from pVP2 C-terminus. It is not essential for the virus viability, but viral growth is affected when missing. Functionally, structural peptide 4 is a small peptide derived from pVP2 C-terminus. It is essential for the virus viability. This Avian infectious bursal disease virus (strain STC) (IBDV) protein is Structural polyprotein.